Here is a 215-residue protein sequence, read N- to C-terminus: Pyrrolidone-carboxylate peptidase (215 aa).

Active-site residues include glutamate 81, cysteine 144, and histidine 168.

This sequence belongs to the peptidase C15 family. In terms of assembly, homotetramer.

It localises to the cytoplasm. The catalysed reaction is Release of an N-terminal pyroglutamyl group from a polypeptide, the second amino acid generally not being Pro.. Removes 5-oxoproline from various penultimate amino acid residues except L-proline. In Bacillus licheniformis (strain ATCC 14580 / DSM 13 / JCM 2505 / CCUG 7422 / NBRC 12200 / NCIMB 9375 / NCTC 10341 / NRRL NRS-1264 / Gibson 46), this protein is Pyrrolidone-carboxylate peptidase.